The sequence spans 751 residues: Ribosome biogenesis protein ERB1 (751 aa).

Disordered stretches follow at residues Met-1–Pro-140 and Ser-289–Asp-336. 2 stretches are compositionally biased toward acidic residues: residues Leu-34–Asp-92 and Ile-119–Thr-129. The span at Ser-294–Pro-305 shows a compositional bias: pro residues. Basic and acidic residues predominate over residues Glu-323–Asp-336. WD repeat units lie at residues His-410 to Arg-449, Pro-536 to Lys-580, Ile-582 to Gln-621, Pro-622 to Lys-661, Tyr-665 to Thr-704, and Thr-720 to Ser-751.

It belongs to the WD repeat BOP1/ERB1 family. As to quaternary structure, component of the NOP7 complex, composed of ERB1, NOP7 and YTM1. The complex is held together by ERB1, which interacts with NOP7 via its N-terminal domain and with YTM1 via a high-affinity interaction between the seven-bladed beta-propeller domains of the 2 proteins. The NOP7 complex associates with the 66S pre-ribosome.

The protein localises to the nucleus. It localises to the nucleolus. It is found in the nucleoplasm. Functionally, component of the NOP7 complex, which is required for maturation of the 25S and 5.8S ribosomal RNAs and formation of the 60S ribosome. This is Ribosome biogenesis protein ERB1 from Coprinopsis cinerea (strain Okayama-7 / 130 / ATCC MYA-4618 / FGSC 9003) (Inky cap fungus).